A 75-amino-acid polypeptide reads, in one-letter code: UPF0270 protein PFLU_4323 (75 aa).

Belongs to the UPF0270 family.

The chain is UPF0270 protein PFLU_4323 from Pseudomonas fluorescens (strain SBW25).